We begin with the raw amino-acid sequence, 517 residues long: Protein disulfide-isomerase A5 (517 aa).

A signal peptide spans 1 to 21 (MARAWGLLLAIGVVLPTWLSS). Intrachain disulfides connect Cys83-Cys92, Cys180-Cys183, Cys303-Cys306, and Cys424-Cys427. 3 consecutive Thioredoxin domains span residues 132–259 (FLKD…NPLP), 268–382 (PWAD…NPEA), and 376–504 (WMQN…TLRE). Residues 514 to 517 (REEL) carry the Prevents secretion from ER motif.

The protein belongs to the protein disulfide isomerase family. Interacts with CALR (via P-domain).

The protein localises to the endoplasmic reticulum lumen. It catalyses the reaction Catalyzes the rearrangement of -S-S- bonds in proteins.. This Mus musculus (Mouse) protein is Protein disulfide-isomerase A5 (Pdia5).